The following is a 117-amino-acid chain: Immunoglobulin kappa variable 1-39 (117 aa).

A signal peptide spans methionine 1 to cysteine 22. The framework-1 stretch occupies residues aspartate 23 to cysteine 45. One can recognise an Ig-like domain in the interval isoleucine 24 to proline 117. A disulfide bridge connects residues cysteine 45 and cysteine 110. The interval arginine 46–asparagine 56 is complementarity-determining-1. Residues tryptophan 57–tyrosine 71 form a framework-2 region. Positions alanine 72–serine 78 are complementarity-determining-2. A framework-3 region spans residues glycine 79–cysteine 110. The complementarity-determining-3 stretch occupies residues glutamine 111–proline 117.

As to quaternary structure, immunoglobulins are composed of two identical heavy chains and two identical light chains; disulfide-linked.

It localises to the secreted. The protein localises to the cell membrane. Functionally, v region of the variable domain of immunoglobulin light chains that participates in the antigen recognition. Immunoglobulins, also known as antibodies, are membrane-bound or secreted glycoproteins produced by B lymphocytes. In the recognition phase of humoral immunity, the membrane-bound immunoglobulins serve as receptors which, upon binding of a specific antigen, trigger the clonal expansion and differentiation of B lymphocytes into immunoglobulins-secreting plasma cells. Secreted immunoglobulins mediate the effector phase of humoral immunity, which results in the elimination of bound antigens. The antigen binding site is formed by the variable domain of one heavy chain, together with that of its associated light chain. Thus, each immunoglobulin has two antigen binding sites with remarkable affinity for a particular antigen. The variable domains are assembled by a process called V-(D)-J rearrangement and can then be subjected to somatic hypermutations which, after exposure to antigen and selection, allow affinity maturation for a particular antigen. The sequence is that of Immunoglobulin kappa variable 1-39 from Homo sapiens (Human).